Reading from the N-terminus, the 175-residue chain is 3-hydroxydecanoyl-[acyl-carrier-protein] dehydratase (175 aa).

Residue His71 is part of the active site.

It belongs to the thioester dehydratase family. FabA subfamily. Homodimer.

Its subcellular location is the cytoplasm. The catalysed reaction is a (3R)-hydroxyacyl-[ACP] = a (2E)-enoyl-[ACP] + H2O. It carries out the reaction (3R)-hydroxydecanoyl-[ACP] = (2E)-decenoyl-[ACP] + H2O. The enzyme catalyses (2E)-decenoyl-[ACP] = (3Z)-decenoyl-[ACP]. Its pathway is lipid metabolism; fatty acid biosynthesis. Necessary for the introduction of cis unsaturation into fatty acids. Catalyzes the dehydration of (3R)-3-hydroxydecanoyl-ACP to E-(2)-decenoyl-ACP and then its isomerization to Z-(3)-decenoyl-ACP. Can catalyze the dehydratase reaction for beta-hydroxyacyl-ACPs with saturated chain lengths up to 16:0, being most active on intermediate chain length. This chain is 3-hydroxydecanoyl-[acyl-carrier-protein] dehydratase, found in Rhodopseudomonas palustris (strain BisB5).